A 156-amino-acid polypeptide reads, in one-letter code: 6,7-dimethyl-8-ribityllumazine synthase (156 aa).

Residues Phe22, 57–59 (AYE), and 81–83 (SVI) contribute to the 5-amino-6-(D-ribitylamino)uracil site. Residue 86-87 (GT) participates in (2S)-2-hydroxy-3-oxobutyl phosphate binding. His89 acts as the Proton donor in catalysis. A 5-amino-6-(D-ribitylamino)uracil-binding site is contributed by Phe114. Arg128 is a binding site for (2S)-2-hydroxy-3-oxobutyl phosphate.

This sequence belongs to the DMRL synthase family. Forms an icosahedral capsid composed of 60 subunits, arranged as a dodecamer of pentamers.

It catalyses the reaction (2S)-2-hydroxy-3-oxobutyl phosphate + 5-amino-6-(D-ribitylamino)uracil = 6,7-dimethyl-8-(1-D-ribityl)lumazine + phosphate + 2 H2O + H(+). It participates in cofactor biosynthesis; riboflavin biosynthesis; riboflavin from 2-hydroxy-3-oxobutyl phosphate and 5-amino-6-(D-ribitylamino)uracil: step 1/2. Functionally, catalyzes the formation of 6,7-dimethyl-8-ribityllumazine by condensation of 5-amino-6-(D-ribitylamino)uracil with 3,4-dihydroxy-2-butanone 4-phosphate. This is the penultimate step in the biosynthesis of riboflavin. This chain is 6,7-dimethyl-8-ribityllumazine synthase, found in Photobacterium leiognathi.